Reading from the N-terminus, the 104-residue chain is MASLFIIMDKRFAVFASSDKPNNCSRKNMFFLKNIIVLSNYLYLLYKAWIVCTTISLCCDFPLFNFLFIAIPYFTEILYNDSSLLWFLFVSLCFITLSFQSLEI.

3 helical membrane-spanning segments follow: residues 30 to 50 (FFLKNIIVLSNYLYLLYKAWI), 54 to 74 (TISLCCDFPLFNFLFIAIPYF), and 84 to 104 (LLWFLFVSLCFITLSFQSLEI).

The protein resides in the endoplasmic reticulum membrane. Its function is as follows. Has a role in meiosis. The sequence is that of Meiotically up-regulated gene 150 protein (mug150) from Schizosaccharomyces pombe (strain 972 / ATCC 24843) (Fission yeast).